The following is a 243-amino-acid chain: Histone H2B.2 (243 aa).

At A2 the chain carries N,N,N-trimethylalanine; alternate. A2 is subject to N,N-dimethylalanine; alternate. A2 carries the N-methylalanine; alternate modification. Positions P67 to D145 are disordered. The segment covering G120–Q132 has biased composition (basic and acidic residues). The span at E133–K142 shows a compositional bias: basic residues.

Belongs to the histone H2B family. As to quaternary structure, the nucleosome is a histone octamer containing two molecules each of H2A, H2B, H3 and H4 assembled in one H3-H4 heterotetramer and two H2A-H2B heterodimers. The octamer wraps approximately 147 bp of DNA. Can be acetylated to form H2BK6ac.

The protein localises to the nucleus. The protein resides in the chromosome. In terms of biological role, core component of nucleosome. Nucleosomes wrap and compact DNA into chromatin, limiting DNA accessibility to the cellular machineries which require DNA as a template. Histones thereby play a central role in transcription regulation, DNA repair, DNA replication and chromosomal stability. DNA accessibility is regulated via a complex set of post-translational modifications of histones, also called histone code, and nucleosome remodeling. The protein is Histone H2B.2 of Arabidopsis thaliana (Mouse-ear cress).